A 64-amino-acid chain; its full sequence is Protein translocase subunit SecE (64 aa).

The chain crosses the membrane as a helical span at residues 35-55 (LVVLGTVAFITVFFAVVDYGI).

This sequence belongs to the SecE/SEC61-gamma family. In terms of assembly, component of the Sec protein translocase complex. Heterotrimer consisting of SecY, SecE and SecG subunits. The heterotrimers can form oligomers, although 1 heterotrimer is thought to be able to translocate proteins. Interacts with the ribosome. Interacts with SecDF, and other proteins may be involved. Interacts with SecA.

It is found in the cell membrane. Essential subunit of the Sec protein translocation channel SecYEG. Clamps together the 2 halves of SecY. May contact the channel plug during translocation. The sequence is that of Protein translocase subunit SecE from Halalkalibacterium halodurans (strain ATCC BAA-125 / DSM 18197 / FERM 7344 / JCM 9153 / C-125) (Bacillus halodurans).